Here is a 34-residue protein sequence, read N- to C-terminus: Conotoxin Cl6d (34 aa).

3 disulfide bridges follow: Cys-4/Cys-19, Cys-12/Cys-29, and Cys-18/Cys-33. 2 positions are modified to 4-hydroxyproline: Pro-14 and Pro-21.

As to expression, expressed by the venom duct.

Its subcellular location is the secreted. The chain is Conotoxin Cl6d from Californiconus californicus (California cone).